The chain runs to 551 residues: Ubiquitin domain-containing protein DSK2b (551 aa).

The 76-residue stretch at 18–93 folds into the Ubiquitin-like domain; that stretch reads VAVNIRCSNG…IHMVRGSAPS (76 aa). The segment at 88 to 127 is disordered; sequence RGSAPSSAPPPAPAASQTTAPSVTRGVGSDNSSNLGGASP. STI1 domains lie at 143–184 and 197–236; these read GNAM…QNLM and NPQM…MREM. Polar residues predominate over residues 294–319; the sequence is QGVTTQGSDASNNSSTPNAGTGTIPN. Residues 294–336 are disordered; it reads QGVTTQGSDASNNSSTPNAGTGTIPNANPLPNPWGATGGQTTA. STI1 domains are found at residues 373 to 410 and 414 to 449; these read SPLG…MNQL and NPQL…MQQM. The interval 455–475 is disordered; that stretch reads SLSQNRNTASQDAGQTGAATG. Residues 465 to 475 show a composition bias toward low complexity; the sequence is QDAGQTGAATG. The 45-residue stretch at 504 to 548 folds into the UBA domain; it reads PPEERYATQLQQLQEMGFYDRAENIRALLATNGNVNAAVERLLGS.

As to quaternary structure, interacts with 'Lys-48'-linked polyubiquitin chains via its UBA domain. Interacts with RPN10 via its ubiquitin-like domain. Interacts with PEX2 and PEX12. As to expression, ubiquitous.

The protein localises to the nucleus. Its subcellular location is the cytoplasm. Binds and presumably selects ubiquitin-conjugates for destruction. Prefers multiubiquitin chains rather than single ubiquitins, with a binding affinity for 'Lys-48'-linked ubiquitin chains. Acts as a ubiquitin receptor that associates with the 26S proteasomal docking subunit RPN10 for the indirect recognition of ubiquitinated substrates of ubiquitin/26S proteasome-mediated proteolysis (UPP). This Arabidopsis thaliana (Mouse-ear cress) protein is Ubiquitin domain-containing protein DSK2b (DSK2B).